The following is a 367-amino-acid chain: uncharacterized protein (367 aa).

It belongs to the Gfo/Idh/MocA family.

This is an uncharacterized protein from Streptococcus pneumoniae serotype 4 (strain ATCC BAA-334 / TIGR4).